Here is a 112-residue protein sequence, read N- to C-terminus: MAEIQFSKGLKEPVVPDIRLSRTKTGEKGSAEFYFKQPTILGDQQTEEITGMYLIDEEGEIVTTKVKGKFINGKPMAIEATVIFNSPAEWDRFMRFMERYGSENGLEFTKSS.

Belongs to the Psb28 family. Part of the photosystem II complex.

It localises to the cellular thylakoid membrane. This is Photosystem II reaction center Psb28 protein from Microcystis aeruginosa (strain NIES-843 / IAM M-2473).